A 270-amino-acid chain; its full sequence is Glucosamine-6-phosphate deaminase (270 aa).

The active-site Proton acceptor; for enolization step is D68. D145 functions as the For ring-opening step in the catalytic mechanism. H147 (proton acceptor; for ring-opening step) is an active-site residue. E152 acts as the For ring-opening step in catalysis.

The protein belongs to the glucosamine/galactosamine-6-phosphate isomerase family. NagB subfamily.

The catalysed reaction is alpha-D-glucosamine 6-phosphate + H2O = beta-D-fructose 6-phosphate + NH4(+). The protein operates within amino-sugar metabolism; N-acetylneuraminate degradation; D-fructose 6-phosphate from N-acetylneuraminate: step 5/5. Catalyzes the reversible isomerization-deamination of glucosamine 6-phosphate (GlcN6P) to form fructose 6-phosphate (Fru6P) and ammonium ion. This is Glucosamine-6-phosphate deaminase from Bifidobacterium longum subsp. infantis (strain ATCC 15697 / DSM 20088 / JCM 1222 / NCTC 11817 / S12).